Here is a 482-residue protein sequence, read N- to C-terminus: UDP-N-acetylmuramoyl-L-alanyl-D-glutamate--2,6-diaminopimelate ligase 1 (482 aa).

Ser30 is a binding site for UDP-N-acetyl-alpha-D-muramoyl-L-alanyl-D-glutamate. Position 110–116 (110–116 (GTNGKTT)) interacts with ATP. UDP-N-acetyl-alpha-D-muramoyl-L-alanyl-D-glutamate-binding positions include 152–153 (TT), Ser179, and Arg187. The residue at position 219 (Lys219) is an N6-carboxylysine. Meso-2,6-diaminopimelate-binding positions include Arg378, 402 to 405 (DNPR), Gly452, and Glu456. The Meso-diaminopimelate recognition motif motif lies at 402–405 (DNPR).

Belongs to the MurCDEF family. MurE subfamily. It depends on Mg(2+) as a cofactor. Carboxylation is probably crucial for Mg(2+) binding and, consequently, for the gamma-phosphate positioning of ATP.

The protein resides in the cytoplasm. It catalyses the reaction UDP-N-acetyl-alpha-D-muramoyl-L-alanyl-D-glutamate + meso-2,6-diaminopimelate + ATP = UDP-N-acetyl-alpha-D-muramoyl-L-alanyl-gamma-D-glutamyl-meso-2,6-diaminopimelate + ADP + phosphate + H(+). The protein operates within cell wall biogenesis; peptidoglycan biosynthesis. Catalyzes the addition of meso-diaminopimelic acid to the nucleotide precursor UDP-N-acetylmuramoyl-L-alanyl-D-glutamate (UMAG) in the biosynthesis of bacterial cell-wall peptidoglycan. In Clostridium acetobutylicum (strain ATCC 824 / DSM 792 / JCM 1419 / IAM 19013 / LMG 5710 / NBRC 13948 / NRRL B-527 / VKM B-1787 / 2291 / W), this protein is UDP-N-acetylmuramoyl-L-alanyl-D-glutamate--2,6-diaminopimelate ligase 1.